The following is a 474-amino-acid chain: Melanopsin (474 aa).

Over 1–72 the chain is Extracellular; it reads MNSPSESRVP…VDVPDHAHYT (72 aa). N31 and N35 each carry an N-linked (GlcNAc...) asparagine glycan. Residues 73–93 traverse the membrane as a helical segment; it reads LGTVILLVGLTGMLGNLTVIY. At 94 to 107 the chain is on the cytoplasmic side; it reads TFCRNRGLRTPANM. Residues 108-128 traverse the membrane as a helical segment; the sequence is LIINLAVSDFLMSFTQAPVFF. Residues 129–144 are Extracellular-facing; sequence ASSLYKKWLFGETGCK. C143 and C221 are disulfide-bonded. Residues 145-165 traverse the membrane as a helical segment; that stretch reads FYAFCGAVFGIVSMITLTAIA. Topologically, residues 166-188 are cytoplasmic; the sequence is MDRYLVITRPLATIGMRSKRRTA. A helical transmembrane segment spans residues 189–209; the sequence is LVLLGVWLYALAWSLPPFFGW. Over 210 to 238 the chain is Extracellular; it reads SAYVPEGLLTSCSWDYVTFTPLVRAYTML. The chain crosses the membrane as a helical span at residues 239–259; it reads LFCFVFFLPLLIIIFCYIFIF. Over 260–293 the chain is Cytoplasmic; that stretch reads RAIRETGRACEGCGESPLRRRQWQRLQSEWKMAK. A helical membrane pass occupies residues 294 to 314; it reads VALIVILLFVLSWAPYSTVAL. At 315–355 the chain is on the extracellular side; it reads VGFAGYSHILTPYMSSVPAVIAKASAIHNPIIYAITHPKYR. K337 carries the post-translational modification N6-(retinylidene)lysine. A helical membrane pass occupies residues 356-372; that stretch reads AAIAQHLPCLGVLLGVS. Residues 373–474 lie on the Cytoplasmic side of the membrane; that stretch reads GQRSHPSLSY…RHLPSLDRRM (102 aa). The interval 428–474 is disordered; sequence AAQQASGQSFCSHDLEDGEVKAPSSPQEQKSKTPKTKRHLPSLDRRM.

The protein belongs to the G-protein coupled receptor 1 family. Opsin subfamily. In terms of tissue distribution, eye; expressed in a photosensitive subset of retinal ganglion cells (at protein level).

It localises to the cell membrane. Its subcellular location is the cell projection. The protein resides in the axon. The protein localises to the dendrite. It is found in the perikaryon. Photoreceptor that binds cis-retinaldehydes. Contributes to pupillar reflex, photoentrainment and other non-image forming responses to light. May be involved in the optokinetic visual tracking response. May be involved in the regulation of retinal hyaloid vessel growth and regression. The protein is Melanopsin of Rattus norvegicus (Rat).